Consider the following 183-residue polypeptide: MKKVHLIQADITAFAVHAIVNSANKSLLGGGGLDYVIHKKAGPLMKEECVRLNQEKGGCPTGQAEVTTAGNLPAKYLIHAVGPRWLDGEHNEPQLLCDAYSNALFKANEIHALTVSFPCISTGVYGFPPQKAAEIAIGTILSMLPQYDHVAEVFFICREDENYLIYKNILSNIDDPNIQILIS.

The Macro domain occupies 1 to 174; sequence MKKVHLIQAD…IYKNILSNID (174 aa).

This sequence belongs to the MacroD-type family.

The polypeptide is Macro domain-containing protein (Acinetobacter sp. (strain ED45-25)).